A 359-amino-acid chain; its full sequence is tRNA N6-adenosine threonylcarbamoyltransferase (359 aa).

Positions 115 and 119 each coordinate Fe cation. Substrate contacts are provided by residues 137-141, aspartate 170, glycine 183, and asparagine 283; that span reads LVSGG. Aspartate 311 lines the Fe cation pocket. The tract at residues 328 to 359 is disordered; it reads APDSLDIAPRSRWPLDEKSAPVFGTGRRGAKA.

It belongs to the KAE1 / TsaD family. The cofactor is Fe(2+).

The protein localises to the cytoplasm. It catalyses the reaction L-threonylcarbamoyladenylate + adenosine(37) in tRNA = N(6)-L-threonylcarbamoyladenosine(37) in tRNA + AMP + H(+). Its function is as follows. Required for the formation of a threonylcarbamoyl group on adenosine at position 37 (t(6)A37) in tRNAs that read codons beginning with adenine. Is involved in the transfer of the threonylcarbamoyl moiety of threonylcarbamoyl-AMP (TC-AMP) to the N6 group of A37, together with TsaE and TsaB. TsaD likely plays a direct catalytic role in this reaction. This is tRNA N6-adenosine threonylcarbamoyltransferase from Brucella melitensis biotype 2 (strain ATCC 23457).